Reading from the N-terminus, the 416-residue chain is NADH-quinone oxidoreductase subunit D (416 aa).

Belongs to the complex I 49 kDa subunit family. As to quaternary structure, NDH-1 is composed of 14 different subunits. Subunits NuoB, C, D, E, F, and G constitute the peripheral sector of the complex.

The protein resides in the cell inner membrane. It carries out the reaction a quinone + NADH + 5 H(+)(in) = a quinol + NAD(+) + 4 H(+)(out). Its function is as follows. NDH-1 shuttles electrons from NADH, via FMN and iron-sulfur (Fe-S) centers, to quinones in the respiratory chain. The immediate electron acceptor for the enzyme in this species is believed to be ubiquinone. Couples the redox reaction to proton translocation (for every two electrons transferred, four hydrogen ions are translocated across the cytoplasmic membrane), and thus conserves the redox energy in a proton gradient. This chain is NADH-quinone oxidoreductase subunit D, found in Gluconacetobacter diazotrophicus (strain ATCC 49037 / DSM 5601 / CCUG 37298 / CIP 103539 / LMG 7603 / PAl5).